A 956-amino-acid polypeptide reads, in one-letter code: Netrin receptor UNC5D (956 aa).

The signal sequence occupies residues 1–30; sequence MGTGAADRSRGARWWLPWLGLCFWAAGAEA. The Extracellular portion of the chain corresponds to 31-382; that stretch reads ARGADSGEVL…SRRGIENASD (352 aa). The Ig-like domain maps to 52–149; that stretch reads PHFIEEPEDA…LGTSKSRKAS (98 aa). 9 disulfides stabilise this stretch: C73-C134, C85-C132, C178-C229, C262-C299, C266-C303, C277-C289, C318-C352, C322-C357, and C330-C342. The interval 89–91 is important for interaction with FLRT2; the sequence is WVH. N115 and N226 each carry an N-linked (GlcNAc...) asparagine glycan. An Ig-like C2-type domain is found at 164–242; sequence QGREVPIEGM…NIVAKRRSLS (79 aa). TSP type-1 domains lie at 250-304 and 306-358; these read NGGW…ALCP and DGSW…GLCI. The helical transmembrane segment at 383–403 threads the bilayer; sequence IALYSGLGAAVVAVAVLVIGV. Topologically, residues 404 to 956 are cytoplasmic; the sequence is TLYRRSHSDY…DFNYSRQNGL (553 aa). One can recognise a ZU5 domain in the interval 545–685; the sequence is LRTTGVFGHL…FGTYALTGEP (141 aa). Positions 862–939 constitute a Death domain; it reads QRICATFDTP…RTHTKLSNIT (78 aa).

It belongs to the unc-5 family. In terms of assembly, interacts (via extracellular domain) with FLRT2 and FLRT3 (via extracellular domain); the interaction is direct. Has higher affinity for FLRT2. Identified in a complex with FLRT3 and ADGRL3; does not interact with ADGRL3 by itself. Proteolytically cleaved by caspases during apoptosis. The cleavage does not take place when the receptor is associated with netrin ligand. Its cleavage by caspases is required to induce apoptosis.

It is found in the cell membrane. Its function is as follows. Receptor for the netrin NTN4 that promotes neuronal cell survival. Plays a role in cell-cell adhesion and cell guidance. Receptor for netrin involved in cell migration. Plays a role in axon guidance by mediating axon repulsion of neuronal growth cones in the developing nervous system upon ligand binding. May play a role in apoptosis in response to DNA damage. It also acts as a dependence receptor required for apoptosis induction when not associated with netrin ligand. Mediates cell-cell adhesion via its interaction with FLRT3 on an adjacent cell. The protein is Netrin receptor UNC5D of Rattus norvegicus (Rat).